Reading from the N-terminus, the 392-residue chain is Chalcone synthase 1 (392 aa).

The active site involves Cys167.

It belongs to the thiolase-like superfamily. Chalcone/stilbene synthases family.

The catalysed reaction is (E)-4-coumaroyl-CoA + 3 malonyl-CoA + 3 H(+) = 2',4,4',6'-tetrahydroxychalcone + 3 CO2 + 4 CoA. It functions in the pathway secondary metabolite biosynthesis; flavonoid biosynthesis. In terms of biological role, the primary product of this enzyme is 4,2',4',6'-tetrahydroxychalcone (also termed naringenin-chalcone or chalcone) which can under specific conditions spontaneously isomerize into naringenin. In Secale cereale (Rye), this protein is Chalcone synthase 1 (CHS1).